Consider the following 63-residue polypeptide: Large ribosomal subunit protein uL29 (63 aa).

Belongs to the universal ribosomal protein uL29 family.

This chain is Large ribosomal subunit protein uL29, found in Edwardsiella ictaluri (strain 93-146).